A 776-amino-acid polypeptide reads, in one-letter code: FT-interacting protein 4 (776 aa).

Residues 1 to 16 (MQRPPPEDFSLKETKP) are compositionally biased toward basic and acidic residues. Residues 1–23 (MQRPPPEDFSLKETKPHLGGGKV) form a disordered region. C2 domains follow at residues 22 to 142 (KVTG…PQWY), 181 to 305 (VSGT…SRWF), and 346 to 474 (YSSD…THSY). Ca(2+)-binding residues include aspartate 55, aspartate 61, aspartate 108, aspartate 110, and aspartate 115. 3 consecutive transmembrane segments (helical) span residues 577–597 (IMGV…ICVW), 608–628 (ILFI…FLYL), and 719–739 (LFVL…FQVV).

This sequence belongs to the MCTP family. In terms of assembly, interacts with and regulates subcellular localization and trafficking of STM. Ca(2+) serves as cofactor. As to expression, highly expressed in both vegetative and inflorescence shoot apical meristems (SAMs). Accumulates in root meristems. Observed in flowers.

It is found in the endoplasmic reticulum membrane. Its subcellular location is the cytoplasm. It localises to the vesicle. The protein localises to the cell membrane. The protein resides in the endosome membrane. It is found in the golgi apparatus membrane. Functionally, required for proliferation and differentiation of shoot stem cells in the shoot apical meristem (SAM), thus determining the appropriate balance between the maintenance of shoot stem cells and their differentiation into other aboveground plant parts via the control of subcellular localization and intercellular trafficking of STM in the shoot apex. Prevents intracellular trafficking of STM to the plasma membrane in cells in the peripheral shoot meristem region thus facilitating STM recycling to the nucleus to maintain stem cells. May function as a signaling molecule by regulating the trafficking of other regulators. This Arabidopsis thaliana (Mouse-ear cress) protein is FT-interacting protein 4.